The chain runs to 172 residues: Ribosome maturation factor RimM (172 aa).

The PRC barrel domain occupies E96–L169.

This sequence belongs to the RimM family. Binds ribosomal protein uS19.

It is found in the cytoplasm. Its function is as follows. An accessory protein needed during the final step in the assembly of 30S ribosomal subunit, possibly for assembly of the head region. Essential for efficient processing of 16S rRNA. May be needed both before and after RbfA during the maturation of 16S rRNA. It has affinity for free ribosomal 30S subunits but not for 70S ribosomes. The chain is Ribosome maturation factor RimM from Syntrophomonas wolfei subsp. wolfei (strain DSM 2245B / Goettingen).